The following is a 365-amino-acid chain: Dihydroorotate dehydrogenase (quinone) (365 aa).

Residues 61 to 65 and S85 each bind FMN; that span reads AGFDK. K65 lines the substrate pocket. Residue 110-114 coordinates substrate; it reads NRMGF. Residues N139 and N170 each coordinate FMN. N170 lines the substrate pocket. Residue S173 is the Nucleophile of the active site. N175 provides a ligand contact to substrate. 2 residues coordinate FMN: K214 and S242. 243–244 serves as a coordination point for substrate; sequence NT. Residues G266, G295, and 316–317 each bind FMN; that span reads YS.

This sequence belongs to the dihydroorotate dehydrogenase family. Type 2 subfamily. In terms of assembly, monomer. FMN is required as a cofactor.

It is found in the cell membrane. The catalysed reaction is (S)-dihydroorotate + a quinone = orotate + a quinol. The protein operates within pyrimidine metabolism; UMP biosynthesis via de novo pathway; orotate from (S)-dihydroorotate (quinone route): step 1/1. Its function is as follows. Catalyzes the conversion of dihydroorotate to orotate with quinone as electron acceptor. In Bradyrhizobium diazoefficiens (strain JCM 10833 / BCRC 13528 / IAM 13628 / NBRC 14792 / USDA 110), this protein is Dihydroorotate dehydrogenase (quinone).